The following is a 122-amino-acid chain: Insulin-like 3 (122 aa).

Positions 1-15 are cleaved as a signal peptide; that stretch reads MRAPLLLMLLALGSA. 3 disulfides stabilise this stretch: cysteine 29/cysteine 107, cysteine 41/cysteine 120, and cysteine 106/cysteine 111.

The protein belongs to the insulin family. As to quaternary structure, heterodimer of a B chain and an A chain linked by two disulfide bonds. Expressed exclusively in Leydig cells of the testis.

It is found in the secreted. Its function is as follows. Seems to play a role in testicular function. May be a trophic hormone with a role in testicular descent in fetal life. Is a ligand for LGR8 receptor. This Mus musculus (Mouse) protein is Insulin-like 3 (Insl3).